Consider the following 587-residue polypeptide: Calcium/calmodulin-dependent protein kinase kinase 2 (587 aa).

Positions 1–11 (MSSCVSSQPTS) are enriched in polar residues. 2 disordered regions span residues 1–32 (MSSC…SQKP) and 74–115 (EADG…SSLD). Serine 2 is modified (N-acetylserine). Phosphoserine occurs at positions 99, 113, 128, 132, and 136. Positions 101–115 (QERSQGGPASSSSLD) are enriched in polar residues. One can recognise a Protein kinase domain in the interval 164–445 (YTLKDEIGKG…VPEIKLHPWV (282 aa)). ATP is bound by residues 170–178 (IGKGSYGVV) and lysine 193. The segment at 203–225 (QAGFPRRPPPRGTRPAPGGCIQP) is RP domain. A disordered region spans residues 204–224 (AGFPRRPPPRGTRPAPGGCIQ). Aspartate 311 (proton acceptor) is an active-site residue. Positions 471 to 476 (ENSVKH) are autoinhibitory domain. A calmodulin-binding region spans residues 474–499 (VKHIPSLATVILVKTMIRKRSFGNPF). Serine 494 and serine 510 each carry phosphoserine. The disordered stretch occupies residues 496-587 (GNPFEGSRRE…QQPEEAMEPE (92 aa)). Residues 520-535 (PTREWEPLSEPKEARQ) are compositionally biased toward basic and acidic residues. Positions 569 to 579 (PGSPPRTPPQQ) are enriched in pro residues. At serine 571 the chain carries Phosphoserine.

It belongs to the protein kinase superfamily. Ser/Thr protein kinase family. As to quaternary structure, interacts with calmodulin. Phosphorylated by PKA. Each isoform may show a different pattern of phosphorylation. Autophosphorylated. Mainly expressed in brain, but detected in all tissues tested (at protein level). In the brain, isoform 1 may be predominant. with high levels in the cerebellum and hippocampus, although isoform 3 is detectable. Isoform 3 is also expressed in lung.

It is found in the nucleus. The protein resides in the cytoplasm. Its subcellular location is the cell projection. The protein localises to the neuron projection. The enzyme catalyses L-seryl-[protein] + ATP = O-phospho-L-seryl-[protein] + ADP + H(+). It catalyses the reaction L-threonyl-[protein] + ATP = O-phospho-L-threonyl-[protein] + ADP + H(+). With respect to regulation, activated by Ca(2+)/calmodulin. Binding of calmodulin may relieve intrasteric autoinhibition. Autophosphorylation does not alter activity or regulation by Ca(2+)/calmodulin. In part, activity is independent on Ca(2+)/calmodulin. Functionally, calcium/calmodulin-dependent protein kinase belonging to a proposed calcium-triggered signaling cascade involved in a number of cellular processes. Phosphorylates CAMK1 and CAMK4. Phosphorylates CAMK1D. Seems to be involved in hippocampal activation of CREB1. Efficiently phosphorylates 5'-AMP-activated protein kinase (AMPK) trimer, including that consisting of PRKAA1, PRKAB1 and PRKAG1. This phosphorylation is stimulated in response to Ca(2+) signals. May play a role in neurite growth. Isoform 2 may promote neurite elongation, while isoform 1 may promoter neurite branching. In Rattus norvegicus (Rat), this protein is Calcium/calmodulin-dependent protein kinase kinase 2 (Camkk2).